The sequence spans 96 residues: uncharacterized protein (96 aa).

The N-terminal stretch at 1-21 is a signal peptide; sequence MLASVLILGAIAVGSAIPTIA.

This is an uncharacterized protein from Archaeoglobus fulgidus (strain ATCC 49558 / DSM 4304 / JCM 9628 / NBRC 100126 / VC-16).